The following is a 124-amino-acid chain: Fluoride-specific ion channel FluC (124 aa).

4 helical membrane-spanning segments follow: residues 4-24, 35-55, 62-82, and 102-122; these read LIFV…ISIF, FGTL…YALG, PEIK…FSTF, and IALN…LVFS. Positions 74 and 77 each coordinate Na(+).

Belongs to the fluoride channel Fluc/FEX (TC 1.A.43) family.

The protein resides in the cell inner membrane. The catalysed reaction is fluoride(in) = fluoride(out). Na(+) is not transported, but it plays an essential structural role and its presence is essential for fluoride channel function. In terms of biological role, fluoride-specific ion channel. Important for reducing fluoride concentration in the cell, thus reducing its toxicity. The chain is Fluoride-specific ion channel FluC from Shewanella loihica (strain ATCC BAA-1088 / PV-4).